A 187-amino-acid polypeptide reads, in one-letter code: Orotate phosphoribosyltransferase (187 aa).

Residues arginine 98, lysine 99, lysine 102, histidine 104, and 128 to 136 contribute to the 5-phospho-alpha-D-ribose 1-diphosphate site; that span reads EDVTTTGGS. Orotate contacts are provided by threonine 132 and arginine 160.

It belongs to the purine/pyrimidine phosphoribosyltransferase family. PyrE subfamily. Homodimer. The cofactor is Mg(2+).

It catalyses the reaction orotidine 5'-phosphate + diphosphate = orotate + 5-phospho-alpha-D-ribose 1-diphosphate. It functions in the pathway pyrimidine metabolism; UMP biosynthesis via de novo pathway; UMP from orotate: step 1/2. In terms of biological role, catalyzes the transfer of a ribosyl phosphate group from 5-phosphoribose 1-diphosphate to orotate, leading to the formation of orotidine monophosphate (OMP). In Rhodopseudomonas palustris (strain ATCC BAA-98 / CGA009), this protein is Orotate phosphoribosyltransferase.